The primary structure comprises 542 residues: MSTDFDRIYYNQSKVSGRFRLGEGGLGWKASATGGSAAMQNNEPILLTADELASVQWSRGCRGYELKINTKNKGVVQLDGFSQEDFTLLKNDLQRRFNVQLEHKDHSLRGWNWGTTDLTRNELIFSLNGKPTFEIPYSHISNTNLTSKNEVALEFDLQKDGYNPAGDELVEMRLYVPGVVTQEDRHSSPAEDADVDMEKDNKEEKSIAEAFYEELRAKAEIGEVSGDAIISFQDVFFTTPRGRYDIDIYKNSIRLRGKTYEYKLQHRQIQRIFSLPKADDIHHLMVLSIEPPLRQGQTTYPYLVLQFQKDEETEVQLNVEDDEFERLYKDKLKKQYDAKTHVVLSHVLKGLTDTRVVVPGEYKSKHEQCAVSCSFKANEGHLYPLDNAFMFLTKPTLYIPFQDVSSVNISRAGQATTSSRTFDLEVVLRSNRGSTTFANISKEEQQILESFLKSKNVRVKNEEKETQQRLQTALGSDSEDEDVNMGSAAEDDESVDEDFQAESEDDDVAEEFDSDAGVSESETEAADGADTEDRPSKKAKLA.

Residues 458–542 (RVKNEEKETQ…DRPSKKAKLA (85 aa)) are disordered. Acidic residues-rich tracts occupy residues 477-514 (DSEDEDVNMGSAAEDDESVDEDFQAESEDDDVAEEFDS) and 521-530 (SETEAADGAD).

It belongs to the SSRP1 family. Forms a stable heterodimer with SPT16. The SPT16-POB3 dimer weakly associates with multiple molecules of NHP6 to form the FACT complex.

It localises to the nucleus. The protein localises to the chromosome. In terms of biological role, component of the FACT complex, a general chromatin factor that acts to reorganize nucleosomes. The FACT complex is involved in multiple processes that require DNA as a template such as mRNA elongation, DNA replication and DNA repair. During transcription elongation the FACT complex acts as a histone chaperone that both destabilizes and restores nucleosomal structure. It facilitates the passage of RNA polymerase II and transcription by promoting the dissociation of one histone H2A-H2B dimer from the nucleosome, then subsequently promotes the reestablishment of the nucleosome following the passage of RNA polymerase II. The protein is FACT complex subunit POB3 (POB3) of Eremothecium gossypii (strain ATCC 10895 / CBS 109.51 / FGSC 9923 / NRRL Y-1056) (Yeast).